The primary structure comprises 277 residues: Tumor necrosis factor-inducible gene 6 protein (277 aa).

The first 17 residues, 1–17 (MIILIYLFLLLWEDTQG), serve as a signal peptide directing secretion. The region spanning 36 to 129 (GVYHREARSG…SERWDAYCYN (94 aa)) is the Link domain. Intrachain disulfides connect Cys-58-Cys-127, Cys-82-Cys-103, and Cys-135-Cys-161. Asn-118 is a glycosylation site (N-linked (GlcNAc...) asparagine). The 113-residue stretch at 135–247 (CGGVFTDPKQ…GGFQIKYVAM (113 aa)) folds into the CUB domain. Residues Glu-183, Asp-191, Asp-232, Ser-234, and Val-235 each contribute to the Ca(2+) site. The cysteines at positions 188 and 210 are disulfide-linked. An N-linked (GlcNAc...) asparagine glycan is attached at Asn-258.

In terms of assembly, interacts (via Link domain) with inter-alpha-inhibitor (I-alpha-I) component bikunin. Interacts with ITIH2/HC2; this interaction is required for transesterification of the HC to hyaluronan. Interacts (via Link and CUB domains) with ITIH1. Chondroitin sulfate may be required for the stability of the complex. Interacts (via Link domain) with various C-X-C and C-C chemokines including PF4, CXCL8, CXCL11, CXCL12, CCL2, CCL7, CCL19, CCL21, and CCL27; this interaction interferes with chemokine binding to glycosaminoglycans. Interacts (primarily via Link domain) with BMP2; this interaction is inhibited by hyaluronan. Interacts (via both Link and CUB domains) with TNFSF11. Interacts (via CUB domain) with FN1 (via type III repeats 9-14); this interaction enhances fibronectin fibril assembly. TNFAIP6 may act as a bridging molecule between FN1 and THBS1. Post-translationally, N-glycosylated. Expressed in airway epithelium and submucosal gland (at protein level). Colocalizes with bikunin at the ciliary border. Present in bronchoalveolar lavage fluid (at protein level). Expressed in mesenchymal stem cells. Found in the synovial fluid of patients with rheumatoid arthritis.

The protein resides in the secreted. In terms of biological role, major regulator of extracellular matrix organization during tissue remodeling. Catalyzes the transfer of a heavy chain (HC) from inter-alpha-inhibitor (I-alpha-I) complex to hyaluronan. Cleaves the ester bond between the C-terminus of the HC and GalNAc residue of the chondroitin sulfate chain in I-alpha-I complex followed by transesterification of the HC to hyaluronan. In the process, potentiates the antiprotease function of I-alpha-I complex through release of free bikunin. Acts as a catalyst in the formation of hyaluronan-HC oligomers and hyaluronan-rich matrix surrounding the cumulus cell-oocyte complex, a necessary step for oocyte fertilization. Assembles hyaluronan in pericellular matrices that serve as platforms for receptor clustering and signaling. Enables binding of hyaluronan deposited on the surface of macrophages to LYVE1 on lymphatic endothelium and facilitates macrophage extravasation. Alters hyaluronan binding to functionally latent CD44 on vascular endothelium, switching CD44 into an active state that supports leukocyte rolling. Modulates the interaction of chemokines with extracellular matrix components and proteoglycans on endothelial cell surface, likely preventing chemokine gradient formation. In a negative feedback mechanism, may limit excessive neutrophil recruitment at inflammatory sites by antagonizing the association of CXCL8 with glycosaminoglycans on vascular endothelium. Has a role in osteogenesis and bone remodeling. Inhibits BMP2-dependent differentiation of mesenchymal stem cell to osteoblasts. Protects against bone erosion during inflammation by inhibiting TNFSF11/RANKL-dependent osteoclast activation. The sequence is that of Tumor necrosis factor-inducible gene 6 protein (TNFAIP6) from Homo sapiens (Human).